The sequence spans 300 residues: Cation-efflux pump FieF (300 aa).

4 helical membrane passes run 12 to 32, 39 to 59, 82 to 102, and 114 to 134; these read AAIA…FAWW, ILAA…NLLV, AALA…LTGI, and PGVG…LVSF. Zn(2+) is bound by residues aspartate 45 and aspartate 49. Residues histidine 153 and aspartate 157 each coordinate Zn(2+). 2 consecutive transmembrane segments (helical) span residues 156-176 and 178-198; these read SDVM…YGWH and ADAL…LRMG.

Belongs to the cation diffusion facilitator (CDF) transporter (TC 2.A.4) family. FieF subfamily. Homodimer.

It localises to the cell inner membrane. It catalyses the reaction Zn(2+)(in) + H(+)(out) = Zn(2+)(out) + H(+)(in). The enzyme catalyses Cd(2+)(in) + H(+)(out) = Cd(2+)(out) + H(+)(in). It carries out the reaction Fe(2+)(in) + H(+)(out) = Fe(2+)(out) + H(+)(in). Divalent metal cation transporter which exports Zn(2+), Cd(2+) and possibly Fe(2+). May be involved in zinc and iron detoxification by efflux. The chain is Cation-efflux pump FieF from Shigella flexneri serotype 5b (strain 8401).